The chain runs to 482 residues: uncharacterized protein (482 aa).

2 WD repeats span residues 92-133 (DMPN…REPI) and 191-230 (GHEH…CLCK).

The protein localises to the cytoplasm. It localises to the nucleus. This is an uncharacterized protein from Schizosaccharomyces pombe (strain 972 / ATCC 24843) (Fission yeast).